The chain runs to 1390 residues: ABC transporter G family member 43 (1390 aa).

The disordered stretch occupies residues 1 to 22 (MTMPQTDGVEFASRNNLENGDG). Positions 137–411 (SKLSRFTFSK…FEDCGFKCPQ (275 aa)) constitute an ABC transporter 1 domain. 171 to 178 (GPPGCGKT) provides a ligand contact to ATP. The ABC transmembrane type-2 1 domain occupies 489-701 (DMFKACSRRE…AEIGLTSNEF (213 aa)). Helical transmembrane passes span 507 to 527 (FVYV…MTVY), 541 to 561 (YLLG…LPEL), 594 to 614 (IPIS…VIGY), 626 to 646 (LILF…GAVF), 651 to 671 (VATT…GFIV), and 737 to 757 (FGAL…ALTF). The ABC transporter 2 domain maps to 798–1043 (FTFQDVQYFI…VIEYFMSIPG (246 aa)). Residue 835 to 842 (GVSGAGKT) coordinates ATP. The 215-residue stretch at 1115–1329 (EQFKACLWKQ…VLNGLLTSQY (215 aa)) folds into the ABC transmembrane type-2 2 domain. Helical transmembrane passes span 1134–1154 (YNLT…ILFL), 1173–1193 (MFTV…FCVA), 1218–1238 (VLVE…IVYP), 1253–1273 (FYSI…LVVV), 1279–1299 (IAFT…GYVM), 1307–1327 (WWIW…LLTS), and 1362–1382 (LVAV…AFFI).

This sequence belongs to the ABC transporter superfamily. ABCG family. PDR (TC 3.A.1.205) subfamily.

Its subcellular location is the membrane. Functionally, may be a general defense protein. This is ABC transporter G family member 43 (ABCG43) from Arabidopsis thaliana (Mouse-ear cress).